The following is a 245-amino-acid chain: 4-hydroxy-tetrahydrodipicolinate reductase (245 aa).

NAD(+)-binding positions include 7–12, 75–77, and 102–105; these read GAKGKV, GTT, and APNF. Residue His132 is the Proton donor/acceptor of the active site. Position 133 (His133) interacts with (S)-2,3,4,5-tetrahydrodipicolinate. Lys136 functions as the Proton donor in the catalytic mechanism. Position 142–143 (142–143) interacts with (S)-2,3,4,5-tetrahydrodipicolinate; it reads GT.

The protein belongs to the DapB family.

Its subcellular location is the cytoplasm. It carries out the reaction (S)-2,3,4,5-tetrahydrodipicolinate + NAD(+) + H2O = (2S,4S)-4-hydroxy-2,3,4,5-tetrahydrodipicolinate + NADH + H(+). It catalyses the reaction (S)-2,3,4,5-tetrahydrodipicolinate + NADP(+) + H2O = (2S,4S)-4-hydroxy-2,3,4,5-tetrahydrodipicolinate + NADPH + H(+). It functions in the pathway amino-acid biosynthesis; L-lysine biosynthesis via DAP pathway; (S)-tetrahydrodipicolinate from L-aspartate: step 4/4. In terms of biological role, catalyzes the conversion of 4-hydroxy-tetrahydrodipicolinate (HTPA) to tetrahydrodipicolinate. The chain is 4-hydroxy-tetrahydrodipicolinate reductase from Mycobacterium marinum (strain ATCC BAA-535 / M).